The primary structure comprises 274 residues: 2,3,4,5-tetrahydropyridine-2,6-dicarboxylate N-succinyltransferase (274 aa).

2 residues coordinate substrate: R104 and D141.

It belongs to the transferase hexapeptide repeat family. Homotrimer.

The protein localises to the cytoplasm. The catalysed reaction is (S)-2,3,4,5-tetrahydrodipicolinate + succinyl-CoA + H2O = (S)-2-succinylamino-6-oxoheptanedioate + CoA. Its pathway is amino-acid biosynthesis; L-lysine biosynthesis via DAP pathway; LL-2,6-diaminopimelate from (S)-tetrahydrodipicolinate (succinylase route): step 1/3. In Shewanella sediminis (strain HAW-EB3), this protein is 2,3,4,5-tetrahydropyridine-2,6-dicarboxylate N-succinyltransferase.